A 151-amino-acid chain; its full sequence is Sec-independent protein translocase protein TatB (151 aa).

A helical transmembrane segment spans residues 1 to 21; it reads MFDIGFLELLICGVIALLVLG. 2 stretches are compositionally biased toward basic and acidic residues: residues 87–99 and 122–132; these read KYEHMILPDDQTR and EPPHEPVRDEA. A disordered region spans residues 87–151; the sequence is KYEHMILPDD…SPTSPSDKYS (65 aa). Positions 134 to 151 are enriched in low complexity; the sequence is ASDQPSDSSPTSPSDKYS.

It belongs to the TatB family. In terms of assembly, the Tat system comprises two distinct complexes: a TatABC complex, containing multiple copies of TatA, TatB and TatC subunits, and a separate TatA complex, containing only TatA subunits. Substrates initially bind to the TatABC complex, which probably triggers association of the separate TatA complex to form the active translocon.

Its subcellular location is the cell inner membrane. Part of the twin-arginine translocation (Tat) system that transports large folded proteins containing a characteristic twin-arginine motif in their signal peptide across membranes. Together with TatC, TatB is part of a receptor directly interacting with Tat signal peptides. TatB may form an oligomeric binding site that transiently accommodates folded Tat precursor proteins before their translocation. The protein is Sec-independent protein translocase protein TatB of Marinobacter nauticus (strain ATCC 700491 / DSM 11845 / VT8) (Marinobacter aquaeolei).